A 772-amino-acid chain; its full sequence is Calcium-binding mitochondrial carrier protein (772 aa).

The N-terminal domain stretch occupies residues 1-377 (MFANRVRQAQ…SISDFEKSTG (377 aa)). 4 EF-hand domains span residues 132-165 (LDAD…ELMA), 166-201 (KPEA…SLDP), 235-270 (LQQE…VKLR), and 347-382 (ITPL…NINK). Ca(2+) contacts are provided by Asp145, Asp147, Thr149, Tyr151, Glu156, Asp179, Asp181, Asn183, Tyr185, and Asp190. Residues Asp360, Asn362, Asp364, Lys366, and Asp371 each coordinate Ca(2+). The linker loop domain stretch occupies residues 378–422 (LNINKIGGGTNYSDSYPSDSHVTIQNSSTTPSPSTPITNTAAAIA). Residues 432–720 (AQQVLESIEN…KALLPDAEYK (289 aa)) are carrier domain. Solcar repeat units lie at residues 436–526 (LESI…LRDL), 535–616 (IYFP…MKTI), and 624–712 (LGPM…LQKA). 6 helical membrane passes run 442 to 459 (FALG…VYPI), 501 to 520 (GILP…LTVN), 545 to 558 (GFAG…TNPL), 591 to 610 (GAGA…FPTY), 630 to 647 (LLAG…VTPA), and 687 to 706 (GALA…LVSY). The C-terminal domain stretch occupies residues 721-772 (PPTNAPITQKDFDVIRGNTNTVQRVIDMESKFGTLHQTRDNNKSSNGGENKN). Positions 751-772 (KFGTLHQTRDNNKSSNGGENKN) are disordered. Low complexity predominate over residues 763–772 (KSSNGGENKN).

Belongs to the mitochondrial carrier (TC 2.A.29) family. Homodimer (via N-terminus).

It localises to the mitochondrion inner membrane. Functionally, mitochondrial and calcium-binding carrier that catalyzes the calcium-dependent exchange of cytoplasmic glutamate with mitochondrial aspartate across the mitochondrial inner membrane. The polypeptide is Calcium-binding mitochondrial carrier protein (mcfO) (Dictyostelium discoideum (Social amoeba)).